The sequence spans 567 residues: MVMEKLRKIHDLKKVHTTLEILQFARRGVIPSEAKRFRATWVVLDRNLKSEGKLCLQELNSNIVVVHRSNPKILRLNLKRRDLPYDEEESIDSSSVLLNGLSLSVMPKGFDQLYWESSTSSSEASSPDSRLVTAPKFELSVLEELLKNETRRKGPSPSEVLNSTTSSPASHKPQVLNDFLRMKESREYTEETDTQRNVSRPVDRVSSVRKQIHLRKQSSPQPPPLCSICQHKTPVFGKPPRKFTFAELQLATGGFSDVNFLAEGGYGSVYRGRLPDGQAVAVKQHKLASTQGDKEFCAEVEVLSCAQQRNLVMLIGYCAEDKKRLLVYEFVCNGSLDSHLYGRRSKTVGDFGLARWQPNGELGVETRVIGAFGYLAPEYTQTGQITEKADVYSFGIVLLELVSGRKAVDLSRNKGEMCLSEWARPFLREQKYEKLIDQRLRGRFCVNEVENMLLAATLCIDPDPLIRPRMSQVLRLLEGDSLSDTSLSSSSSGLLNGSPVSILLIGDLSQDSSSSRSSSASSVLKSFSRTQHSSRSSSNAGSPLNPAATQALAFKKYNKNTTRHTQD.

Residues 148–206 form a disordered region; it reads NETRRKGPSPSEVLNSTTSSPASHKPQVLNDFLRMKESREYTEETDTQRNVSRPVDRVS. Residues 159 to 169 are compositionally biased toward polar residues; sequence EVLNSTTSSPA. Over residues 180–189 the composition is skewed to basic and acidic residues; it reads LRMKESREYT. Over residues 196–206 the composition is skewed to low complexity; that stretch reads RNVSRPVDRVS. The Protein kinase domain occupies 255–487; the sequence is FSDVNFLAEG…EGDSLSDTSL (233 aa). ATP-binding positions include 261 to 269 and K283; that span reads LAEGGYGSV. The segment covering 511-538 has biased composition (low complexity); sequence DSSSSRSSSASSVLKSFSRTQHSSRSSS. The interval 511-567 is disordered; that stretch reads DSSSSRSSSASSVLKSFSRTQHSSRSSSNAGSPLNPAATQALAFKKYNKNTTRHTQD. Basic residues predominate over residues 556 to 567; sequence KYNKNTTRHTQD.

This Selaginella moellendorffii (Spikemoss) protein is Inactive protein kinase SELMODRAFT_444075.